We begin with the raw amino-acid sequence, 330 residues long: Fructose-1,6-bisphosphatase class 1 (330 aa).

Mg(2+) is bound by residues Glu84, Asp103, Leu105, and Asp106. Substrate is bound by residues 106 to 109, Asn196, and Lys262; that span reads DGSS. Glu268 is a binding site for Mg(2+).

The protein belongs to the FBPase class 1 family. Homotetramer. Requires Mg(2+) as cofactor.

It localises to the cytoplasm. It catalyses the reaction beta-D-fructose 1,6-bisphosphate + H2O = beta-D-fructose 6-phosphate + phosphate. It functions in the pathway carbohydrate biosynthesis; gluconeogenesis. This is Fructose-1,6-bisphosphatase class 1 from Shewanella sp. (strain ANA-3).